The sequence spans 236 residues: Syntaxin-8 (236 aa).

At 1-215 (MAPDPWFSTY…LVDRKSASCG (215 aa)) the chain is on the cytoplasmic side. The stretch at 42–65 (LTIRTLLKNLKVKIDLLKDLLLRA) forms a coiled coil. S102 and S160 each carry phosphoserine. Residues 145 to 207 (QKIIQEQDAG…RTEARRVTLV (63 aa)) form the t-SNARE coiled-coil homology domain. A helical; Anchor for type IV membrane protein membrane pass occupies residues 216–232 (MIMVILLLLVAIVVVAV). The Vesicular portion of the chain corresponds to 233 to 236 (WPTN).

Belongs to the syntaxin family. In terms of assembly, part of the SNARE core complex containing STX7, VAMP8 and VTI1B. Interacts with VAMP8. Forms a SNARE complex with STX7, VTI1B and VAMP8 which functions in the homotypic fusion of late endosomes. Component of the SNARE complex composed of STX7, STX8, VAMP7 and VTI1B that is required for heterotypic fusion of late endosomes with lysosomes. Interacts with HECTD3. Interacts with TPC1. Ubiquitinated by HECTD3. In terms of tissue distribution, widely expressed in all tissues examined.

The protein localises to the membrane. Its function is as follows. Vesicle trafficking protein that functions in the early secretory pathway, possibly by mediating retrograde transport from cis-Golgi membranes to the ER. This chain is Syntaxin-8 (Stx8), found in Rattus norvegicus (Rat).